We begin with the raw amino-acid sequence, 358 residues long: Protein SRG1 (358 aa).

Positions 209 to 309 constitute a Fe2OG dioxygenase domain; it reads SVQSMRMNYY…RLSIATFHNV (101 aa). Residues H233, D235, and H290 each contribute to the Fe cation site.

The protein belongs to the iron/ascorbate-dependent oxidoreductase family. Low expression in roots and leaves.

This chain is Protein SRG1 (SRG1), found in Arabidopsis thaliana (Mouse-ear cress).